Reading from the N-terminus, the 1085-residue chain is Protein IFH1 (1085 aa).

Disordered regions lie at residues methionine 1–leucine 251, lysine 283–glycine 302, serine 457–valine 493, aspartate 507–valine 622, valine 676–lysine 700, and glutamine 747–leucine 774. 2 stretches are compositionally biased toward polar residues: residues lysine 9–serine 18 and arginine 39–threonine 48. A compositionally biased stretch (low complexity) spans serine 54–valine 66. Basic residues predominate over residues asparagine 76–lysine 85. Residues aspartate 120–isoleucine 165 show a composition bias toward acidic residues. Over residues alanine 184–glutamate 197 the composition is skewed to polar residues. At serine 208 the chain carries Phosphoserine. A compositionally biased stretch (basic and acidic residues) spans proline 209 to valine 239. Residues glycine 241–leucine 251 are compositionally biased toward polar residues. A compositionally biased stretch (basic and acidic residues) spans lysine 283–serine 297. A compositionally biased stretch (basic residues) spans glutamine 474–glutamine 483. Positions lysine 484 to valine 493 are enriched in polar residues. The segment covering histidine 513–lysine 524 has biased composition (basic residues). The segment covering serine 546–tyrosine 557 has biased composition (polar residues). A compositionally biased stretch (basic and acidic residues) spans glutamate 584–aspartate 599. Composition is skewed to acidic residues over residues threonine 607 to serine 620 and valine 676 to asparagine 686. Residues glutamine 747–glycine 764 are compositionally biased toward basic and acidic residues. Residue serine 1041 is modified to Phosphoserine.

It belongs to the IFH1 family.

It localises to the nucleus. In terms of biological role, transcriptional coactivator that together with FHL1 regulates the expression of rRNA and ribosomal protein genes. Its activity is negatively regulated by environmental stress. This chain is Protein IFH1 (IFH1), found in Saccharomyces cerevisiae (strain ATCC 204508 / S288c) (Baker's yeast).